A 961-amino-acid polypeptide reads, in one-letter code: DNA replication licensing factor MCM2 (961 aa).

Residues 1 to 17 are compositionally biased toward polar residues; that stretch reads MDDSENNAPSTPGSPGF. 2 disordered regions span residues 1–81 and 120–220; these read MDDS…FNDN and AEAE…EEDE. The span at 39 to 78 shows a compositional bias: acidic residues; that stretch reads SDDDDDDVVGAEEAEVDPNVLPEDDGVVAAEEEEDGEDLF. Composition is skewed to basic and acidic residues over residues 120-146 and 166-176; these read AEAE…LHDQ and PPREPRTPRSD. Residues 205-220 are compositionally biased toward acidic residues; sequence QTDDDPYEDEFDEEDE. The segment at 380–406 adopts a C4-type zinc-finger fold; it reads CSKCGTVLGPFFQNSYTEVKVGSCPEC. The 207-residue stretch at 524-730 folds into the MCM domain; sequence IGERIVKSIA…FTDEMLARFV (207 aa). ATP is bound at residue 574 to 581; sequence GDPGTAKS. An Arginine finger motif is present at residues 706–709; it reads SRFD.

It belongs to the MCM family. As to quaternary structure, component of the minichromosome maintenance (MCM) complex, a heterotetramer composed of MCM2, MCM3, MCM4, MCM5, MCM6 and MCM7.

Its subcellular location is the nucleus. The enzyme catalyses ATP + H2O = ADP + phosphate + H(+). In terms of biological role, probable component of the MCM2-7 complex (MCM complex) that may function as a DNA helicase and which is essential to undergo a single round of replication initiation and elongation per cell cycle in eukaryotic cells. This chain is DNA replication licensing factor MCM2, found in Oryza sativa subsp. indica (Rice).